Here is a 392-residue protein sequence, read N- to C-terminus: Lipid-A-disaccharide synthase (392 aa).

This sequence belongs to the LpxB family.

It catalyses the reaction a lipid X + a UDP-2-N,3-O-bis[(3R)-3-hydroxyacyl]-alpha-D-glucosamine = a lipid A disaccharide + UDP + H(+). It functions in the pathway bacterial outer membrane biogenesis; LPS lipid A biosynthesis. In terms of biological role, condensation of UDP-2,3-diacylglucosamine and 2,3-diacylglucosamine-1-phosphate to form lipid A disaccharide, a precursor of lipid A, a phosphorylated glycolipid that anchors the lipopolysaccharide to the outer membrane of the cell. The protein is Lipid-A-disaccharide synthase of Bradyrhizobium diazoefficiens (strain JCM 10833 / BCRC 13528 / IAM 13628 / NBRC 14792 / USDA 110).